We begin with the raw amino-acid sequence, 333 residues long: Holliday junction branch migration complex subunit RuvB (333 aa).

The interval methionine 1 to tyrosine 173 is large ATPase domain (RuvB-L). ATP-binding positions include leucine 11, arginine 12, glycine 53, lysine 56, threonine 57, threonine 58, glutamate 120–phenylalanine 122, arginine 163, tyrosine 173, and arginine 210. Residue threonine 57 coordinates Mg(2+). The small ATPAse domain (RuvB-S) stretch occupies residues threonine 174–glycine 244. Residues serine 247 to asparagine 333 are head domain (RuvB-H). Arginine 302 and arginine 307 together coordinate DNA.

This sequence belongs to the RuvB family. Homohexamer. Forms an RuvA(8)-RuvB(12)-Holliday junction (HJ) complex. HJ DNA is sandwiched between 2 RuvA tetramers; dsDNA enters through RuvA and exits via RuvB. An RuvB hexamer assembles on each DNA strand where it exits the tetramer. Each RuvB hexamer is contacted by two RuvA subunits (via domain III) on 2 adjacent RuvB subunits; this complex drives branch migration. In the full resolvosome a probable DNA-RuvA(4)-RuvB(12)-RuvC(2) complex forms which resolves the HJ.

It localises to the cytoplasm. It carries out the reaction ATP + H2O = ADP + phosphate + H(+). Its function is as follows. The RuvA-RuvB-RuvC complex processes Holliday junction (HJ) DNA during genetic recombination and DNA repair, while the RuvA-RuvB complex plays an important role in the rescue of blocked DNA replication forks via replication fork reversal (RFR). RuvA specifically binds to HJ cruciform DNA, conferring on it an open structure. The RuvB hexamer acts as an ATP-dependent pump, pulling dsDNA into and through the RuvAB complex. RuvB forms 2 homohexamers on either side of HJ DNA bound by 1 or 2 RuvA tetramers; 4 subunits per hexamer contact DNA at a time. Coordinated motions by a converter formed by DNA-disengaged RuvB subunits stimulates ATP hydrolysis and nucleotide exchange. Immobilization of the converter enables RuvB to convert the ATP-contained energy into a lever motion, pulling 2 nucleotides of DNA out of the RuvA tetramer per ATP hydrolyzed, thus driving DNA branch migration. The RuvB motors rotate together with the DNA substrate, which together with the progressing nucleotide cycle form the mechanistic basis for DNA recombination by continuous HJ branch migration. Branch migration allows RuvC to scan DNA until it finds its consensus sequence, where it cleaves and resolves cruciform DNA. The protein is Holliday junction branch migration complex subunit RuvB of Deinococcus radiodurans (strain ATCC 13939 / DSM 20539 / JCM 16871 / CCUG 27074 / LMG 4051 / NBRC 15346 / NCIMB 9279 / VKM B-1422 / R1).